A 215-amino-acid chain; its full sequence is Cytochrome b6 (215 aa).

Residues 32 to 52 (IFYCIGGITFTCFLVQVATGF) form a helical membrane-spanning segment. Cysteine 35 contributes to the heme c binding site. 6 residues coordinate heme b: glycine 37, arginine 83, histidine 86, histidine 100, arginine 103, and arginine 114. Residues 90–110 (ASMMVLMMVLHVFRVYLTGGF) form a helical membrane-spanning segment. 2 helical membrane-spanning segments follow: residues 116–136 (LTWV…VTGY) and 186–206 (LHTF…FLMI). Positions 187 and 202 each coordinate heme b. The heme c site is built by arginine 207 and isoleucine 211. Residue serine 212 coordinates heme b.

Belongs to the cytochrome b family. PetB subfamily. The 4 large subunits of the cytochrome b6-f complex are cytochrome b6, subunit IV (17 kDa polypeptide, PetD), cytochrome f and the Rieske protein, while the 4 small subunits are PetG, PetL, PetM and PetN. The complex functions as a dimer. Requires heme b as cofactor. It depends on heme c as a cofactor. In terms of processing, the N-terminus is blocked.

It localises to the plastid. Its subcellular location is the chloroplast thylakoid membrane. Its function is as follows. Component of the cytochrome b6-f complex, which mediates electron transfer between photosystem II (PSII) and photosystem I (PSI), cyclic electron flow around PSI, and state transitions. The protein is Cytochrome b6 of Chlamydomonas reinhardtii (Chlamydomonas smithii).